The primary structure comprises 160 residues: Leptin (160 aa).

An N-terminal signal peptide occupies residues 1–17 (MDYTLALALSLLQLSMC). An intrachain disulfide couples Cys-109 to Cys-160.

It belongs to the leptin family.

The protein resides in the secreted. Its function is as follows. May function as part of a signaling pathway that acts to regulate the size of the body fat depot. The chain is Leptin (lep) from Tetraodon nigroviridis (Spotted green pufferfish).